A 229-amino-acid polypeptide reads, in one-letter code: Probable U3 small nucleolar RNA-associated protein 11 (229 aa).

Disordered stretches follow at residues 1–23 (MSSLRNAIQRRAHKERAQPESRK) and 199–229 (KKPGRKRKLREDEIENQTSRPVYKWRAQRKR).

The protein belongs to the UTP11 family. As to quaternary structure, component of the ribosomal small subunit (SSU) processome.

Its subcellular location is the nucleus. The protein resides in the nucleolus. Involved in nucleolar processing of pre-18S ribosomal RNA. This is Probable U3 small nucleolar RNA-associated protein 11 from Oryza sativa subsp. japonica (Rice).